Reading from the N-terminus, the 222-residue chain is Neurotrophic factor BDNF precursor form (222 aa).

Residues 1–4 (CMKA) form the signal peptide. Residues 5-113 (APMKEVSVRG…AANMSMRVRR (109 aa)) constitute a propeptide that is removed on maturation. Residue N106 is glycosylated (N-linked (GlcNAc...) asparagine). Disulfide bonds link C126-C193 and C171-C222.

This sequence belongs to the NGF-beta family.

The protein resides in the secreted. Functionally, promotes the survival of neuronal populations that are all located either in the central nervous system or directly connected to it. The chain is Neurotrophic factor BDNF precursor form (BDNF) from Xenopeltis unicolor (Sunbeam snake).